Here is a 328-residue protein sequence, read N- to C-terminus: Carbonic anhydrase, chloroplastic (328 aa).

Residues 1–15 (MSTSSINGFSLSSLS) are compositionally biased toward low complexity. The tract at residues 1–26 (MSTSSINGFSLSSLSPAKTSTKRTTL) is disordered. Residues 1–70 (MSTSSINGFS…IITPVLREEM (70 aa)) constitute a chloroplast transit peptide.

This sequence belongs to the beta-class carbonic anhydrase family. Homohexamer.

Its subcellular location is the plastid. It localises to the chloroplast stroma. It catalyses the reaction hydrogencarbonate + H(+) = CO2 + H2O. Functionally, reversible hydration of carbon dioxide. In Pisum sativum (Garden pea), this protein is Carbonic anhydrase, chloroplastic.